Here is a 593-residue protein sequence, read N- to C-terminus: ABC transporter F family member 2 (593 aa).

Basic residues predominate over residues 1 to 10; it reads MAKKGGKNNK. The interval 1–25 is disordered; it reads MAKKGGKNNKSKKEVTPPTSDVEDE. ABC transporter domains lie at 53-294 and 364-583; these read VKIE…VNQM and MHFD…RDLT. ATP-binding positions include 85-92 and 399-406; these read GQNGCGKS and GPNGAGKS.

The protein belongs to the ABC transporter superfamily. ABCF family. EF3 subfamily.

This is ABC transporter F family member 2 (abcF2) from Dictyostelium discoideum (Social amoeba).